Consider the following 390-residue polypeptide: Nicotinate phosphoribosyltransferase (390 aa).

His211 bears the Phosphohistidine; by autocatalysis mark.

It belongs to the NAPRTase family. Post-translationally, transiently phosphorylated on a His residue during the reaction cycle. Phosphorylation strongly increases the affinity for substrates and increases the rate of nicotinate D-ribonucleotide production. Dephosphorylation regenerates the low-affinity form of the enzyme, leading to product release.

It catalyses the reaction nicotinate + 5-phospho-alpha-D-ribose 1-diphosphate + ATP + H2O = nicotinate beta-D-ribonucleotide + ADP + phosphate + diphosphate. It functions in the pathway cofactor biosynthesis; NAD(+) biosynthesis; nicotinate D-ribonucleotide from nicotinate: step 1/1. Its function is as follows. Catalyzes the synthesis of beta-nicotinate D-ribonucleotide from nicotinate and 5-phospho-D-ribose 1-phosphate at the expense of ATP. The protein is Nicotinate phosphoribosyltransferase of Chromohalobacter salexigens (strain ATCC BAA-138 / DSM 3043 / CIP 106854 / NCIMB 13768 / 1H11).